The primary structure comprises 211 residues: RING finger protein 222 (211 aa).

An RING-type zinc finger spans residues 14–65 (CPVCYEKFRDLDGASRTLSCGHVFCHDCLVKYLLSTRVDGQVQRTIVCPICR). A helical transmembrane segment spans residues 187 to 207 (LITLIAVVAVVAAILPWVLLV).

It localises to the membrane. In Mus musculus (Mouse), this protein is RING finger protein 222 (Rnf222).